Here is a 331-residue protein sequence, read N- to C-terminus: Probable cyclic nucleotide synthase IK1_05630 (331 aa).

The protein belongs to the CD-NTase family. D12 subfamily.

Cyclic nucleotide synthase (second messenger synthase) of a CBASS antivirus system. CBASS (cyclic oligonucleotide-based antiphage signaling system) provides immunity against bacteriophage. The CD-NTase protein synthesizes cyclic nucleotides in response to infection; these serve as specific second messenger signals. The signals activate a diverse range of effectors, leading to bacterial cell death and thus abortive phage infection. A type I-B CBASS system. In terms of biological role, probably a cyclic nucleotide synthase that makes second messenger nucleotide which activates a CBASS antiviral defense system. Its function is as follows. Protects B.subtilis against phage infection. When IK1_05630 and IK1_05631 are introduced in B.subtilis BEST7003 there is 1000-fold protection against phage SBSphiC. Both genes are required for protection. Activation leads to bacterial cell lysis and death, which occurs before the phage has finished its replication cycle, thus protecting non-infected bacteria by aborting the phage infection and preventing its propagation. The polypeptide is Probable cyclic nucleotide synthase IK1_05630 (Bacillus cereus (strain VD146)).